Here is a 282-residue protein sequence, read N- to C-terminus: Bis(5'-nucleosyl)-tetraphosphatase, symmetrical (282 aa).

The protein belongs to the Ap4A hydrolase family.

It catalyses the reaction P(1),P(4)-bis(5'-adenosyl) tetraphosphate + H2O = 2 ADP + 2 H(+). In terms of biological role, hydrolyzes diadenosine 5',5'''-P1,P4-tetraphosphate to yield ADP. This is Bis(5'-nucleosyl)-tetraphosphatase, symmetrical from Salmonella arizonae (strain ATCC BAA-731 / CDC346-86 / RSK2980).